A 333-amino-acid chain; its full sequence is Galactinol synthase 1 (333 aa).

Lysine 104 is a catalytic residue. Residues aspartate 120, aspartate 122, and histidine 257 each coordinate Mn(2+).

It belongs to the glycosyltransferase 8 family. Galactosyltransferase subfamily. A divalent metal cation is required as a cofactor. As to expression, expressed in source leaves, specifically in the mesophyll.

The protein resides in the cytoplasm. It catalyses the reaction myo-inositol + UDP-alpha-D-galactose = alpha-D-galactosyl-(1-&gt;3)-1D-myo-inositol + UDP + H(+). Functionally, major galactinol synthase mainly involved in the biosynthesis of storage raffinose family oligosaccharides (RFOs) that function as osmoprotectants. May promote plant stress tolerance. In Ajuga reptans (Bugle), this protein is Galactinol synthase 1 (GOLS1).